Consider the following 325-residue polypeptide: Glycerol-3-phosphate dehydrogenase [NAD(P)+] (325 aa).

NADPH-binding residues include S14, F15, R35, and K109. Sn-glycerol 3-phosphate is bound by residues K109 and G137. A141 is an NADPH binding site. The sn-glycerol 3-phosphate site is built by K192, D247, S257, R258, and N259. K192 (proton acceptor) is an active-site residue. R258 contacts NADPH. NADPH-binding residues include L282 and E284.

This sequence belongs to the NAD-dependent glycerol-3-phosphate dehydrogenase family.

The protein localises to the cytoplasm. It carries out the reaction sn-glycerol 3-phosphate + NAD(+) = dihydroxyacetone phosphate + NADH + H(+). It catalyses the reaction sn-glycerol 3-phosphate + NADP(+) = dihydroxyacetone phosphate + NADPH + H(+). It participates in membrane lipid metabolism; glycerophospholipid metabolism. In terms of biological role, catalyzes the reduction of the glycolytic intermediate dihydroxyacetone phosphate (DHAP) to sn-glycerol 3-phosphate (G3P), the key precursor for phospholipid synthesis. The sequence is that of Glycerol-3-phosphate dehydrogenase [NAD(P)+] from Rickettsia conorii (strain ATCC VR-613 / Malish 7).